A 718-amino-acid chain; its full sequence is Heat shock 70 kDa protein 6, chloroplastic (718 aa).

The N-terminal 92 residues, 1 to 92 (MASSAAQIHV…IDLGTTNSAV (92 aa)), are a transit peptide targeting the chloroplast. Residues 671–718 (QSLYNQPGAGGPGAGPSPGGEGASSGDSSSSKGGDGDDVIDADFTDSQ) are disordered. A compositionally biased stretch (gly residues) spans 678–693 (GAGGPGAGPSPGGEGA). A compositionally biased stretch (acidic residues) spans 706–718 (GDDVIDADFTDSQ).

The protein belongs to the heat shock protein 70 (TC 1.A.33) family. DnaK subfamily. Interacts with geminivirus movement protein (MP).

The protein resides in the plastid. The protein localises to the chloroplast stroma. Functionally, acts redundantly with HSP70-7 in the thermotolerance of germinating seeds. Plays an important role in the protein precursor import into chloroplasts. In terms of biological role, in cooperation with other chaperones, Hsp70s are key components that facilitate folding of de novo synthesized proteins, assist translocation of precursor proteins into organelles, and are responsible for degradation of damaged protein under stress conditions. The polypeptide is Heat shock 70 kDa protein 6, chloroplastic (HSP70-6) (Arabidopsis thaliana (Mouse-ear cress)).